Consider the following 173-residue polypeptide: uncharacterized protein (173 aa).

The N-acetyltransferase domain occupies 2–171 (VTVREAKLED…PDLSALKTLL (170 aa)).

It belongs to the acetyltransferase family.

This is an uncharacterized protein from Bacillus subtilis (strain 168).